Here is a 116-residue protein sequence, read N- to C-terminus: NADH-ubiquinone oxidoreductase chain 3 (116 aa).

Helical transmembrane passes span 8-28 (VVAT…LPSL), 56-76 (FFLI…LLPL), and 88-108 (TLLW…YEWF).

Belongs to the complex I subunit 3 family.

The protein localises to the mitochondrion membrane. It carries out the reaction a ubiquinone + NADH + 5 H(+)(in) = a ubiquinol + NAD(+) + 4 H(+)(out). Its function is as follows. Core subunit of the mitochondrial membrane respiratory chain NADH dehydrogenase (Complex I) that is believed to belong to the minimal assembly required for catalysis. Complex I functions in the transfer of electrons from NADH to the respiratory chain. The immediate electron acceptor for the enzyme is believed to be ubiquinone. This is NADH-ubiquinone oxidoreductase chain 3 (MT-ND3) from Scyliorhinus canicula (Small-spotted catshark).